We begin with the raw amino-acid sequence, 154 residues long: Insulin-like growth factor 1 (154 aa).

Residues Gly50 to Thr78 are b. 3 disulfide bridges follow: Cys55–Cys97, Cys67–Cys110, and Cys96–Cys101. Residues Gly79–Thr90 are c. The a stretch occupies residues Gly91–Ala111. The interval Pro112–Ala119 is d. Residues Arg120–Met154 constitute a propeptide, e peptide. Residues Ser121–Met154 are disordered. The segment covering Arg126–Leu139 has biased composition (basic and acidic residues). Over residues Lys140–Met154 the composition is skewed to polar residues.

The protein belongs to the insulin family. Forms a ternary complex with IGFR1 and ITGAV:ITGB3. Forms a ternary complex with IGFR1 and ITGA6:ITGB4. Forms a ternary complex with IGFBP3 and ALS.

The protein resides in the secreted. In terms of biological role, the insulin-like growth factors, isolated from plasma, are structurally and functionally related to insulin but have a much higher growth-promoting activity. May be a physiological regulator of [1-14C]-2-deoxy-D-glucose (2DG) transport and glycogen synthesis in osteoblasts. Stimulates glucose transport in bone-derived osteoblastic (PyMS) cells and is effective at much lower concentrations than insulin, not only regarding glycogen and DNA synthesis but also with regard to enhancing glucose uptake. May play a role in synapse maturation. Ca(2+)-dependent exocytosis of IGF1 is required for sensory perception of smell in the olfactory bulb. Acts as a ligand for IGF1R. Binds to the alpha subunit of IGF1R, leading to the activation of the intrinsic tyrosine kinase activity which autophosphorylates tyrosine residues in the beta subunit thus initiating a cascade of down-stream signaling events leading to activation of the PI3K-AKT/PKB and the Ras-MAPK pathways. Binds to integrins ITGAV:ITGB3 and ITGA6:ITGB4. Its binding to integrins and subsequent ternary complex formation with integrins and IGFR1 are essential for IGF1 signaling. Induces the phosphorylation and activation of IGFR1, MAPK3/ERK1, MAPK1/ERK2 and AKT1. As part of the MAPK/ERK signaling pathway, acts as a negative regulator of apoptosis in cardiomyocytes via promotion of STUB1/CHIP-mediated ubiquitination and degradation of ICER-type isoforms of CREM. This Ovis aries (Sheep) protein is Insulin-like growth factor 1.